A 148-amino-acid polypeptide reads, in one-letter code: FAD synthase (148 aa).

Residues 14-15, 19-22, and aspartate 100 contribute to the ATP site; these read VF and HVGH.

It belongs to the archaeal FAD synthase family. Homodimer. Requires a divalent metal cation as cofactor.

The catalysed reaction is FMN + ATP + H(+) = FAD + diphosphate. Its pathway is cofactor biosynthesis; FAD biosynthesis; FAD from FMN: step 1/1. In terms of biological role, catalyzes the transfer of the AMP portion of ATP to flavin mononucleotide (FMN) to produce flavin adenine dinucleotide (FAD) coenzyme. The protein is FAD synthase of Pyrococcus abyssi (strain GE5 / Orsay).